Here is a 209-residue protein sequence, read N- to C-terminus: Large ribosomal subunit protein uL3 (209 aa).

Positions 112–122 (GTTRGHGTQGN) are enriched in polar residues. A disordered region spans residues 112–146 (GTTRGHGTQGNIKRWGQSRGPETHGSRYHRIPGSM).

The protein belongs to the universal ribosomal protein uL3 family. As to quaternary structure, part of the 50S ribosomal subunit. Forms a cluster with proteins L14 and L19.

Functionally, one of the primary rRNA binding proteins, it binds directly near the 3'-end of the 23S rRNA, where it nucleates assembly of the 50S subunit. This is Large ribosomal subunit protein uL3 from Lactobacillus johnsonii (strain CNCM I-12250 / La1 / NCC 533).